Consider the following 182-residue polypeptide: Adenine phosphoribosyltransferase (182 aa).

This sequence belongs to the purine/pyrimidine phosphoribosyltransferase family. In terms of assembly, homodimer.

Its subcellular location is the cytoplasm. The enzyme catalyses AMP + diphosphate = 5-phospho-alpha-D-ribose 1-diphosphate + adenine. It functions in the pathway purine metabolism; AMP biosynthesis via salvage pathway; AMP from adenine: step 1/1. In terms of biological role, catalyzes a salvage reaction resulting in the formation of AMP, that is energically less costly than de novo synthesis. The protein is Adenine phosphoribosyltransferase of Sulfurimonas denitrificans (strain ATCC 33889 / DSM 1251) (Thiomicrospira denitrificans (strain ATCC 33889 / DSM 1251)).